The following is a 311-amino-acid chain: tRNA dimethylallyltransferase (311 aa).

ATP is bound at residue 12 to 19; the sequence is GPTASGKT. 14 to 19 is a binding site for substrate; it reads TASGKT. 3 interaction with substrate tRNA regions span residues 37–40, 161–165, and 241–246; these read DSAL, QRINR, and RCVGYR.

Belongs to the IPP transferase family. As to quaternary structure, monomer. The cofactor is Mg(2+).

It carries out the reaction adenosine(37) in tRNA + dimethylallyl diphosphate = N(6)-dimethylallyladenosine(37) in tRNA + diphosphate. Functionally, catalyzes the transfer of a dimethylallyl group onto the adenine at position 37 in tRNAs that read codons beginning with uridine, leading to the formation of N6-(dimethylallyl)adenosine (i(6)A). This is tRNA dimethylallyltransferase from Histophilus somni (strain 2336) (Haemophilus somnus).